Consider the following 261-residue polypeptide: Thiazole synthase (261 aa).

Residue Lys101 is the Schiff-base intermediate with DXP of the active site. 1-deoxy-D-xylulose 5-phosphate is bound by residues Gly162, 188–189 (AG), and 210–211 (NT).

It belongs to the ThiG family. In terms of assembly, homotetramer. Forms heterodimers with either ThiH or ThiS.

The protein resides in the cytoplasm. The enzyme catalyses [ThiS sulfur-carrier protein]-C-terminal-Gly-aminoethanethioate + 2-iminoacetate + 1-deoxy-D-xylulose 5-phosphate = [ThiS sulfur-carrier protein]-C-terminal Gly-Gly + 2-[(2R,5Z)-2-carboxy-4-methylthiazol-5(2H)-ylidene]ethyl phosphate + 2 H2O + H(+). Its pathway is cofactor biosynthesis; thiamine diphosphate biosynthesis. Functionally, catalyzes the rearrangement of 1-deoxy-D-xylulose 5-phosphate (DXP) to produce the thiazole phosphate moiety of thiamine. Sulfur is provided by the thiocarboxylate moiety of the carrier protein ThiS. In vitro, sulfur can be provided by H(2)S. The polypeptide is Thiazole synthase (Aromatoleum aromaticum (strain DSM 19018 / LMG 30748 / EbN1) (Azoarcus sp. (strain EbN1))).